A 339-amino-acid chain; its full sequence is tRNA N6-adenosine threonylcarbamoyltransferase (339 aa).

Residues His-111 and His-115 each contribute to the Fe cation site. Residues 134–138 (LVSGG), Asp-167, Gly-180, and Asn-272 contribute to the substrate site. Asp-300 serves as a coordination point for Fe cation.

This sequence belongs to the KAE1 / TsaD family. Fe(2+) is required as a cofactor.

Its subcellular location is the cytoplasm. It catalyses the reaction L-threonylcarbamoyladenylate + adenosine(37) in tRNA = N(6)-L-threonylcarbamoyladenosine(37) in tRNA + AMP + H(+). Required for the formation of a threonylcarbamoyl group on adenosine at position 37 (t(6)A37) in tRNAs that read codons beginning with adenine. Is involved in the transfer of the threonylcarbamoyl moiety of threonylcarbamoyl-AMP (TC-AMP) to the N6 group of A37, together with TsaE and TsaB. TsaD likely plays a direct catalytic role in this reaction. This Vibrio cholerae serotype O1 (strain ATCC 39541 / Classical Ogawa 395 / O395) protein is tRNA N6-adenosine threonylcarbamoyltransferase.